Reading from the N-terminus, the 498-residue chain is Glycerol kinase (498 aa).

Position 12 (Thr-12) interacts with ADP. 3 residues coordinate ATP: Thr-12, Thr-13, and Ser-14. Position 12 (Thr-12) interacts with sn-glycerol 3-phosphate. Arg-16 is an ADP binding site. Sn-glycerol 3-phosphate is bound by residues Arg-82, Glu-83, Tyr-134, and Asp-243. Glycerol is bound by residues Arg-82, Glu-83, Tyr-134, Asp-243, and Gln-244. Thr-265 and Gly-308 together coordinate ADP. Thr-265, Gly-308, Gln-312, and Gly-409 together coordinate ATP. Gly-409 and Asn-413 together coordinate ADP.

It belongs to the FGGY kinase family. In terms of assembly, homotetramer and homodimer (in equilibrium).

It catalyses the reaction glycerol + ATP = sn-glycerol 3-phosphate + ADP + H(+). It participates in polyol metabolism; glycerol degradation via glycerol kinase pathway; sn-glycerol 3-phosphate from glycerol: step 1/1. Activated by phosphorylation and inhibited by fructose 1,6-bisphosphate (FBP). In terms of biological role, key enzyme in the regulation of glycerol uptake and metabolism. Catalyzes the phosphorylation of glycerol to yield sn-glycerol 3-phosphate. The chain is Glycerol kinase from Clostridium botulinum (strain ATCC 19397 / Type A).